We begin with the raw amino-acid sequence, 252 residues long: dITP/XTP pyrophosphatase (252 aa).

A substrate-binding site is contributed by 7–12; sequence THNEGK. Residue Asp74 is the Proton acceptor of the active site. Asp74 contacts Mg(2+). Substrate contacts are provided by residues Ser75 and 193–196; that span reads FGYD. The segment at 202–229 is disordered; it reads DDQPAGRVSTEPDHEGEPLTSAEMTPAE. Substrate is bound by residues Lys230 and 235–236; that span reads HR.

The protein belongs to the HAM1 NTPase family. Homodimer. Mg(2+) is required as a cofactor.

The catalysed reaction is XTP + H2O = XMP + diphosphate + H(+). It catalyses the reaction dITP + H2O = dIMP + diphosphate + H(+). The enzyme catalyses ITP + H2O = IMP + diphosphate + H(+). Pyrophosphatase that catalyzes the hydrolysis of nucleoside triphosphates to their monophosphate derivatives, with a high preference for the non-canonical purine nucleotides XTP (xanthosine triphosphate), dITP (deoxyinosine triphosphate) and ITP. Seems to function as a house-cleaning enzyme that removes non-canonical purine nucleotides from the nucleotide pool, thus preventing their incorporation into DNA/RNA and avoiding chromosomal lesions. The chain is dITP/XTP pyrophosphatase from Bifidobacterium longum (strain NCC 2705).